The sequence spans 110 residues: U32-theraphotoxin-Cg1a (110 aa).

The N-terminal stretch at 1–19 (MKHCFLILFTLIVFTVVWS) is a signal peptide. A propeptide spanning residues 20–43 (LEENEEYPDEDEMIESFMDGYSYR) is cleaved from the precursor. 4 disulfide bridges follow: C49-C63, C56-C69, C60-C105, and C62-C80.

The protein belongs to the neurotoxin 03 (Tx2) family. 02 subfamily. In terms of tissue distribution, expressed by the venom gland.

The protein localises to the secreted. In terms of biological role, probable ion channel inhibitor. This Chilobrachys guangxiensis (Chinese earth tiger tarantula) protein is U32-theraphotoxin-Cg1a.